We begin with the raw amino-acid sequence, 425 residues long: Type I restriction enzyme MjaVII specificity subunit (425 aa).

A target recognition domain 1 region spans residues 9 to 168 (KKTEIGEIPE…KSFKIPLPPL (160 aa)). The tract at residues 169–208 (EEQKQIAKILTKIDEGIEIIEKSINKLERIKKGLMHKLLT) is central conserved region (CCR). Residues 169-208 (EEQKQIAKILTKIDEGIEIIEKSINKLERIKKGLMHKLLT) are a coiled coil. Positions 209–368 (KGIGHSRFKK…TFKELSKSML (160 aa)) are target recognition domain 2. The stretch at 369–418 (ENFKIPLPPLEEQKQIAKILSSVDKSIELKKQKKEKLQRMKKKIMELLLT) forms a coiled coil. A distal conserved region (DCR) region spans residues 369–418 (ENFKIPLPPLEEQKQIAKILSSVDKSIELKKQKKEKLQRMKKKIMELLLT).

This sequence belongs to the type-I restriction system S methylase family. In terms of assembly, the type I restriction/modification system is composed of three polypeptides R, M and S.

In terms of biological role, the specificity (S) subunit of a type I restriction enzyme; this subunit dictates DNA sequence specificity. The M and S subunits together form a methyltransferase (MTase) that methylates A-3 on the top and bottom strands of the sequence 5'-CAAN(7)TGG-3'. In the presence of the R subunit the complex can also act as an endonuclease, binding to the same target sequence but cutting the DNA some distance from this site. Whether the DNA is cut or modified depends on the methylation state of the target sequence. When the target site is unmodified, the DNA is cut. When the target site is hemimethylated, the complex acts as a maintenance MTase modifying the DNA so that both strands become methylated. After locating a non-methylated recognition site, the enzyme complex serves as a molecular motor that translocates DNA in an ATP-dependent manner until a collision occurs that triggers cleavage. The chain is Type I restriction enzyme MjaVII specificity subunit from Methanocaldococcus jannaschii (strain ATCC 43067 / DSM 2661 / JAL-1 / JCM 10045 / NBRC 100440) (Methanococcus jannaschii).